The sequence spans 79 residues: Acyl carrier protein (79 aa).

The Carrier domain maps to 2-77; the sequence is STIEERVKKI…QAIDYVKSHV (76 aa). Ser37 carries the post-translational modification O-(pantetheine 4'-phosphoryl)serine.

It belongs to the acyl carrier protein (ACP) family. In terms of processing, 4'-phosphopantetheine is transferred from CoA to a specific serine of apo-ACP by AcpS. This modification is essential for activity because fatty acids are bound in thioester linkage to the sulfhydryl of the prosthetic group.

It is found in the cytoplasm. The protein operates within lipid metabolism; fatty acid biosynthesis. Its function is as follows. Carrier of the growing fatty acid chain in fatty acid biosynthesis. The polypeptide is Acyl carrier protein (Xanthomonas oryzae pv. oryzae (strain MAFF 311018)).